Here is a 120-residue protein sequence, read N- to C-terminus: Large ribosomal subunit protein uL22 (120 aa).

It belongs to the universal ribosomal protein uL22 family. In terms of assembly, part of the 50S ribosomal subunit.

In terms of biological role, this protein binds specifically to 23S rRNA; its binding is stimulated by other ribosomal proteins, e.g. L4, L17, and L20. It is important during the early stages of 50S assembly. It makes multiple contacts with different domains of the 23S rRNA in the assembled 50S subunit and ribosome. Its function is as follows. The globular domain of the protein is located near the polypeptide exit tunnel on the outside of the subunit, while an extended beta-hairpin is found that lines the wall of the exit tunnel in the center of the 70S ribosome. This Corynebacterium efficiens (strain DSM 44549 / YS-314 / AJ 12310 / JCM 11189 / NBRC 100395) protein is Large ribosomal subunit protein uL22.